A 494-amino-acid chain; its full sequence is Aspartyl/glutamyl-tRNA(Asn/Gln) amidotransferase subunit B (494 aa).

Belongs to the GatB/GatE family. GatB subfamily. As to quaternary structure, heterotrimer of A, B and C subunits.

The catalysed reaction is L-glutamyl-tRNA(Gln) + L-glutamine + ATP + H2O = L-glutaminyl-tRNA(Gln) + L-glutamate + ADP + phosphate + H(+). It carries out the reaction L-aspartyl-tRNA(Asn) + L-glutamine + ATP + H2O = L-asparaginyl-tRNA(Asn) + L-glutamate + ADP + phosphate + 2 H(+). Functionally, allows the formation of correctly charged Asn-tRNA(Asn) or Gln-tRNA(Gln) through the transamidation of misacylated Asp-tRNA(Asn) or Glu-tRNA(Gln) in organisms which lack either or both of asparaginyl-tRNA or glutaminyl-tRNA synthetases. The reaction takes place in the presence of glutamine and ATP through an activated phospho-Asp-tRNA(Asn) or phospho-Glu-tRNA(Gln). The protein is Aspartyl/glutamyl-tRNA(Asn/Gln) amidotransferase subunit B of Synechococcus sp. (strain ATCC 27144 / PCC 6301 / SAUG 1402/1) (Anacystis nidulans).